The sequence spans 930 residues: Vacuolar membrane protease (930 aa).

The disordered stretch occupies residues 1 to 28 (MPQEEVHDTSSVSDDNLTNTGGGGSNYY). The Cytoplasmic portion of the chain corresponds to 1-49 (MPQEEVHDTSSVSDDNLTNTGGGGSNYYNSHNQPNVFVRAIRSIFGYRK). Residues 50–70 (TSLTLFVILTIIFTIALSLYD) traverse the membrane as a helical segment. The Vacuolar segment spans residues 71–379 (NNLDLTIELP…YFFSSPISAL (309 aa)). A glycan (N-linked (GlcNAc...) asparagine) is linked at Asn163. Zn(2+)-binding residues include His177 and Asp189. Glu222 acts as the Proton acceptor in catalysis. Zn(2+)-binding residues include Glu223, Glu248, and His320. An N-linked (GlcNAc...) asparagine glycan is attached at Asn354. Residues 380 to 400 (VTINSVLIVLFPILSGPLLFI) traverse the membrane as a helical segment. The Cytoplasmic segment spans residues 401-411 (TVRYKKWKIGT). Residues 412–432 (SNFLSLPLAIVLTVAIVMIVV) traverse the membrane as a helical segment. Topologically, residues 433–449 (NQGFQIANPFLPSSHPL) are vacuolar. The helical transmembrane segment at 450-470 (LLVATTTSISLLIYYVFLNGV) threads the bilayer. Over 471-480 (NWVSPSGDQK) the chain is Cytoplasmic. Residues 481–501 (LITIIEISFIYWLILIYVTHG) form a helical membrane-spanning segment. Residues 502 to 514 (LSQNKIGDDHTGE) are Vacuolar-facing. Residues 515-535 (FPFTVLFFLEATASLFGLIGW) traverse the membrane as a helical segment. Topologically, residues 536–598 (TFSRSIKQSS…FGYDWSLQYL (63 aa)) are cytoplasmic. Residues 542 to 570 (KQSSNDGSDEPLLTGTAERYGSDDTDEDE) form a disordered region. Residues 599–619 (LIVPISSLIIFNSGWLVLDGI) form a helical membrane-spanning segment. Asn620 carries an N-linked (GlcNAc...) asparagine glycan. Residues 620–631 (NKSIQESFAAEN) lie on the Vacuolar side of the membrane. Residues 632 to 652 (LIYLLIQLFSQFWILPILPFV) traverse the membrane as a helical segment. Over 653 to 657 (YKLNR) the chain is Cytoplasmic. Residues 658–678 (FIVFGLTIFAISGVALISFLD) traverse the membrane as a helical segment. Residues 679-930 (PFNQENPLKL…LVSVSLKIEV (252 aa)) lie on the Vacuolar side of the membrane. N-linked (GlcNAc...) asparagine glycans are attached at residues Asn697, Asn768, Asn808, and Asn890.

The protein belongs to the peptidase M28 family. Zn(2+) is required as a cofactor.

It is found in the vacuole membrane. In terms of biological role, may be involved in vacuolar sorting and osmoregulation. In Candida dubliniensis (strain CD36 / ATCC MYA-646 / CBS 7987 / NCPF 3949 / NRRL Y-17841) (Yeast), this protein is Vacuolar membrane protease.